We begin with the raw amino-acid sequence, 192 residues long: Crossover junction endodeoxyribonuclease RuvC (192 aa).

Residues D9, E70, and D143 contribute to the active site. Mg(2+) is bound by residues D9, E70, and D143. The tract at residues 161 to 192 is disordered; the sequence is GASVATTGPGSSSLTPAQRAWAEAEAKARRAR. A compositionally biased stretch (polar residues) spans 163–176; sequence SVATTGPGSSSLTP. A compositionally biased stretch (basic and acidic residues) spans 182–192; it reads AEAEAKARRAR.

This sequence belongs to the RuvC family. As to quaternary structure, homodimer which binds Holliday junction (HJ) DNA. The HJ becomes 2-fold symmetrical on binding to RuvC with unstacked arms; it has a different conformation from HJ DNA in complex with RuvA. In the full resolvosome a probable DNA-RuvA(4)-RuvB(12)-RuvC(2) complex forms which resolves the HJ. The cofactor is Mg(2+).

Its subcellular location is the cytoplasm. The catalysed reaction is Endonucleolytic cleavage at a junction such as a reciprocal single-stranded crossover between two homologous DNA duplexes (Holliday junction).. The RuvA-RuvB-RuvC complex processes Holliday junction (HJ) DNA during genetic recombination and DNA repair. Endonuclease that resolves HJ intermediates. Cleaves cruciform DNA by making single-stranded nicks across the HJ at symmetrical positions within the homologous arms, yielding a 5'-phosphate and a 3'-hydroxyl group; requires a central core of homology in the junction. The consensus cleavage sequence is 5'-(A/T)TT(C/G)-3'. Cleavage occurs on the 3'-side of the TT dinucleotide at the point of strand exchange. HJ branch migration catalyzed by RuvA-RuvB allows RuvC to scan DNA until it finds its consensus sequence, where it cleaves and resolves the cruciform DNA. The protein is Crossover junction endodeoxyribonuclease RuvC of Pseudarthrobacter chlorophenolicus (strain ATCC 700700 / DSM 12829 / CIP 107037 / JCM 12360 / KCTC 9906 / NCIMB 13794 / A6) (Arthrobacter chlorophenolicus).